A 122-amino-acid chain; its full sequence is Small ribosomal subunit protein uS13 (122 aa).

Residues 97-114 show a composition bias toward basic residues; it reads PVRGQRTHTNAKTRKGKS. A disordered region spans residues 97–122; it reads PVRGQRTHTNAKTRKGKSRLPIAGKE.

It belongs to the universal ribosomal protein uS13 family. Part of the 30S ribosomal subunit. Forms a loose heterodimer with protein S19. Forms two bridges to the 50S subunit in the 70S ribosome.

Located at the top of the head of the 30S subunit, it contacts several helices of the 16S rRNA. In the 70S ribosome it contacts the 23S rRNA (bridge B1a) and protein L5 of the 50S subunit (bridge B1b), connecting the 2 subunits; these bridges are implicated in subunit movement. Contacts the tRNAs in the A and P-sites. This chain is Small ribosomal subunit protein uS13, found in Wolbachia sp. subsp. Brugia malayi (strain TRS).